Here is a 332-residue protein sequence, read N- to C-terminus: Pyrroline-5-carboxylate reductase (332 aa).

It belongs to the pyrroline-5-carboxylate reductase family.

It catalyses the reaction L-proline + NADP(+) = (S)-1-pyrroline-5-carboxylate + NADPH + 2 H(+). The catalysed reaction is L-proline + NAD(+) = (S)-1-pyrroline-5-carboxylate + NADH + 2 H(+). The protein operates within amino-acid biosynthesis; L-proline biosynthesis; L-proline from L-glutamate 5-semialdehyde: step 1/1. This chain is Pyrroline-5-carboxylate reductase (pro-1), found in Neurospora crassa (strain ATCC 24698 / 74-OR23-1A / CBS 708.71 / DSM 1257 / FGSC 987).